A 318-amino-acid chain; its full sequence is Methionyl-tRNA formyltransferase (318 aa).

110 to 113 (SLLP) lines the (6S)-5,6,7,8-tetrahydrofolate pocket.

Belongs to the Fmt family.

The enzyme catalyses L-methionyl-tRNA(fMet) + (6R)-10-formyltetrahydrofolate = N-formyl-L-methionyl-tRNA(fMet) + (6S)-5,6,7,8-tetrahydrofolate + H(+). Functionally, attaches a formyl group to the free amino group of methionyl-tRNA(fMet). The formyl group appears to play a dual role in the initiator identity of N-formylmethionyl-tRNA by promoting its recognition by IF2 and preventing the misappropriation of this tRNA by the elongation apparatus. The protein is Methionyl-tRNA formyltransferase of Latilactobacillus sakei subsp. sakei (strain 23K) (Lactobacillus sakei subsp. sakei).